We begin with the raw amino-acid sequence, 197 residues long: Imidazoleglycerol-phosphate dehydratase (197 aa).

This sequence belongs to the imidazoleglycerol-phosphate dehydratase family.

It localises to the cytoplasm. The catalysed reaction is D-erythro-1-(imidazol-4-yl)glycerol 3-phosphate = 3-(imidazol-4-yl)-2-oxopropyl phosphate + H2O. The protein operates within amino-acid biosynthesis; L-histidine biosynthesis; L-histidine from 5-phospho-alpha-D-ribose 1-diphosphate: step 6/9. This chain is Imidazoleglycerol-phosphate dehydratase, found in Methanocaldococcus jannaschii (strain ATCC 43067 / DSM 2661 / JAL-1 / JCM 10045 / NBRC 100440) (Methanococcus jannaschii).